We begin with the raw amino-acid sequence, 883 residues long: Phosphoenolpyruvate carboxylase (883 aa).

Active-site residues include His138 and Lys546.

This sequence belongs to the PEPCase type 1 family. The cofactor is Mg(2+).

It carries out the reaction oxaloacetate + phosphate = phosphoenolpyruvate + hydrogencarbonate. Functionally, forms oxaloacetate, a four-carbon dicarboxylic acid source for the tricarboxylic acid cycle. This Erwinia tasmaniensis (strain DSM 17950 / CFBP 7177 / CIP 109463 / NCPPB 4357 / Et1/99) protein is Phosphoenolpyruvate carboxylase.